Reading from the N-terminus, the 1029-residue chain is Translation initiation factor IF-2 (1029 aa).

The segment at 73–441 (RELRSEEDDG…RQRRRERKRE (369 aa)) is disordered. 2 stretches are compositionally biased toward acidic residues: residues 106-121 (TAEE…DEEE) and 148-177 (AEAE…DEAE). Residues 183–196 (AADKDAAAIADEQK) are compositionally biased toward basic and acidic residues. Composition is skewed to acidic residues over residues 213–234 (TGEE…DAEA), 242–258 (TEAE…AEDV), and 279–322 (APDE…DEEG). Positions 358–372 (KDKDKDKSSKKDKKD) are enriched in basic and acidic residues. A compositionally biased stretch (basic residues) spans 373 to 386 (KSNKKSKSKGKKQK). Residues 400–411 (QTLQETLQELEQ) show a composition bias toward low complexity. Basic residues predominate over residues 417-427 (RQRRRRRRRKR). Residues 428-441 (HEEERQRRRERKRE) are compositionally biased toward basic and acidic residues. The tr-type G domain occupies 524–696 (PRAPVVTVMG…LLQSEIMELK (173 aa)). The interval 533–540 (GHVDHGKT) is G1. 533–540 (GHVDHGKT) contributes to the GTP binding site. The G2 stretch occupies residues 558–562 (GITQH). The tract at residues 582 to 585 (DTPG) is G3. GTP-binding positions include 582–586 (DTPGH) and 636–639 (NKMD). A G4 region spans residues 636 to 639 (NKMD). The G5 stretch occupies residues 672–674 (SAK).

It belongs to the TRAFAC class translation factor GTPase superfamily. Classic translation factor GTPase family. IF-2 subfamily.

Its subcellular location is the cytoplasm. One of the essential components for the initiation of protein synthesis. Protects formylmethionyl-tRNA from spontaneous hydrolysis and promotes its binding to the 30S ribosomal subunits. Also involved in the hydrolysis of GTP during the formation of the 70S ribosomal complex. The sequence is that of Translation initiation factor IF-2 from Salinibacter ruber (strain DSM 13855 / M31).